The sequence spans 363 residues: Serpentine receptor class beta-17 (363 aa).

7 helical membrane passes run 46–66 (AFLL…GSII), 75–95 (LLAF…SCFL), 120–140 (VILA…SMLC), 169–189 (IGFV…LYMY), 214–234 (YIFI…IGLY), 273–293 (CAQL…RIFL), and 304–324 (VTEF…ICIV).

The protein belongs to the nematode receptor-like protein srb family.

Its subcellular location is the membrane. This is Serpentine receptor class beta-17 (srb-17) from Caenorhabditis elegans.